The chain runs to 178 residues: Ribosome maturation factor RimM (178 aa).

Residues 101–178 enclose the PRC barrel domain; it reads ADEYYWYQLV…VMRVEWDADF (78 aa).

It belongs to the RimM family. As to quaternary structure, binds ribosomal protein uS19.

Its subcellular location is the cytoplasm. An accessory protein needed during the final step in the assembly of 30S ribosomal subunit, possibly for assembly of the head region. Essential for efficient processing of 16S rRNA. May be needed both before and after RbfA during the maturation of 16S rRNA. It has affinity for free ribosomal 30S subunits but not for 70S ribosomes. The sequence is that of Ribosome maturation factor RimM from Pseudomonas putida (strain GB-1).